A 392-amino-acid polypeptide reads, in one-letter code: Obg-like ATPase 1 (392 aa).

The OBG-type G domain maps to 21 to 285 (LKTGIVGMPN…FTEEEAIEEC (265 aa)). Residue 30 to 35 (NVGKST) participates in ATP binding. Ser34 and Thr55 together coordinate Mg(2+). An ATP-binding site is contributed by Met233. Residues 306–389 (NLINYFTCGE…ESGDIAHWKA (84 aa)) enclose the TGS domain.

It belongs to the TRAFAC class OBG-HflX-like GTPase superfamily. OBG GTPase family. YchF/OLA1 subfamily. In terms of assembly, monomer. It depends on Mg(2+) as a cofactor.

The protein localises to the cytoplasm. It is found in the nucleus. In terms of biological role, hydrolyzes ATP, and can also hydrolyze GTP with lower efficiency. Has lower affinity for GTP. Negatively regulates the G2/M transition in the cell cycle. The sequence is that of Obg-like ATPase 1 from Schizosaccharomyces pombe (strain 972 / ATCC 24843) (Fission yeast).